A 358-amino-acid chain; its full sequence is MAILIKNKVPTTLYQVYDNEGKLIDPNHKITLTDEQLKHAYYLMNLSRMMDKKMLVWQRAGKMLNFAPNLGEEALQVGMGLGLNENDWVCPTFRSGALMLYRGVKPEQLLLYWNGNEKGSQIDAKYKTLPINITIGAQYSHAAGLGYMLHYKKQPNVAVTMIGDGGTAEGEFYEAMNIASIHKWNTVFCINNNQFAISTRTKLESAVSDLSVKAIACGIPRVRVDGNDLIASYEAMQDAANYARGGNGPVLIEFFSYRQGPHTTSDDPSIYRTKQEEEEGMKSDPVKRLRNFLFDRSILNQAQEEEMFSKIEQEIQAAYEKMVLDTPVSVDEVFDYNYQELTPELVEQKQIAKKYFKD.

As to quaternary structure, heterodimer of an alpha and a beta chain. It depends on thiamine diphosphate as a cofactor.

It carries out the reaction N(6)-[(R)-lipoyl]-L-lysyl-[protein] + pyruvate + H(+) = N(6)-[(R)-S(8)-acetyldihydrolipoyl]-L-lysyl-[protein] + CO2. Its function is as follows. The pyruvate dehydrogenase complex catalyzes the overall conversion of pyruvate to acetyl-CoA and CO(2). It contains multiple copies of three enzymatic components: pyruvate dehydrogenase (E1), dihydrolipoamide acetyltransferase (E2) and lipoamide dehydrogenase (E3). The polypeptide is Pyruvate dehydrogenase E1 component subunit alpha (pdhA) (Mycoplasma genitalium (strain ATCC 33530 / DSM 19775 / NCTC 10195 / G37) (Mycoplasmoides genitalium)).